A 204-amino-acid polypeptide reads, in one-letter code: Peptide deformylase (204 aa).

Residues Cys131 and His174 each contribute to the Fe cation site. Glu175 is an active-site residue. Fe cation is bound at residue His178.

The protein belongs to the polypeptide deformylase family. It depends on Fe(2+) as a cofactor.

It catalyses the reaction N-terminal N-formyl-L-methionyl-[peptide] + H2O = N-terminal L-methionyl-[peptide] + formate. Functionally, removes the formyl group from the N-terminal Met of newly synthesized proteins. Requires at least a dipeptide for an efficient rate of reaction. N-terminal L-methionine is a prerequisite for activity but the enzyme has broad specificity at other positions. The polypeptide is Peptide deformylase (Streptococcus mutans serotype c (strain ATCC 700610 / UA159)).